The following is a 391-amino-acid chain: 3-ketoacyl-CoA thiolase (391 aa).

Catalysis depends on cysteine 95, which acts as the Acyl-thioester intermediate. Catalysis depends on proton acceptor residues histidine 347 and cysteine 377.

The protein belongs to the thiolase-like superfamily. Thiolase family. In terms of assembly, heterotetramer of two alpha chains (FadB) and two beta chains (FadA).

It is found in the cytoplasm. The catalysed reaction is an acyl-CoA + acetyl-CoA = a 3-oxoacyl-CoA + CoA. It participates in lipid metabolism; fatty acid beta-oxidation. Its function is as follows. Catalyzes the final step of fatty acid oxidation in which acetyl-CoA is released and the CoA ester of a fatty acid two carbons shorter is formed. The polypeptide is 3-ketoacyl-CoA thiolase (Pseudomonas putida (Arthrobacter siderocapsulatus)).